Reading from the N-terminus, the 159-residue chain is Ribonuclease H (159 aa).

The 143-residue stretch at 2–144 (SQDPVIIHTD…ADELATRGLQ (143 aa)) folds into the RNase H type-1 domain. Positions 11, 50, 72, and 136 each coordinate Mg(2+).

It belongs to the RNase H family. Monomer. Mg(2+) is required as a cofactor.

It localises to the cytoplasm. It catalyses the reaction Endonucleolytic cleavage to 5'-phosphomonoester.. In terms of biological role, endonuclease that specifically degrades the RNA of RNA-DNA hybrids. The protein is Ribonuclease H of Mycolicibacterium smegmatis (strain ATCC 700084 / mc(2)155) (Mycobacterium smegmatis).